A 790-amino-acid polypeptide reads, in one-letter code: LPS-assembly protein LptD (790 aa).

An N-terminal signal peptide occupies residues Met-1 to Ala-20.

This sequence belongs to the LptD family. Component of the lipopolysaccharide transport and assembly complex. Interacts with LptE and LptA.

Its subcellular location is the cell outer membrane. Together with LptE, is involved in the assembly of lipopolysaccharide (LPS) at the surface of the outer membrane. The protein is LPS-assembly protein LptD of Bordetella bronchiseptica (strain ATCC BAA-588 / NCTC 13252 / RB50) (Alcaligenes bronchisepticus).